Consider the following 163-residue polypeptide: Choriogonadotropin subunit beta variant 2 (163 aa).

Residues 1–18 (MSKGLLLLLLLSMGGTWA) form the signal peptide. Disulfide bonds link C27-C75, C41-C90, C44-C128, C52-C106, C56-C108, and C111-C118. N31 and N48 each carry an N-linked (GlcNAc...) asparagine glycan. The disordered stretch occupies residues 129-163 (DDPRFQASSSSKAPPPSLPSPSRLPGPSDTPILPQ). Pro residues predominate over residues 141-152 (APPPSLPSPSRL).

This sequence belongs to the glycoprotein hormones subunit beta family. In terms of tissue distribution, expressed in placenta, testis and pituitary.

Its subcellular location is the secreted. The protein is Choriogonadotropin subunit beta variant 2 (CGB2) of Homo sapiens (Human).